We begin with the raw amino-acid sequence, 534 residues long: Glucomannan 4-beta-mannosyltransferase 2 (534 aa).

A helical transmembrane segment spans residues 36–56 (VIVPLLQLAVYICLLMSVMLL). Aspartate 136 is an active-site residue. Aspartate 195 and aspartate 197 together coordinate substrate. Aspartate 289 is an active-site residue. 4 helical membrane passes run 368-388 (IIAH…TILV), 404-426 (IITI…WILF), 483-503 (LNTL…YDFV), and 509-529 (YFIY…GWIG).

The protein belongs to the glycosyltransferase 2 family. Plant cellulose synthase-like A subfamily.

It localises to the golgi apparatus membrane. It catalyses the reaction GDP-mannose + (glucomannan)n = GDP + (glucomannan)n+1.. Functionally, possesses glucomannan synthase and mannan synthase activities in vitro. Mannan synthase consists of a 4-beta-mannosyltransferase activity on mannan using GDP-mannose. The beta-1,4-mannan product is the backbone for galactomannan synthesis by galactomannan galactosyltransferase. Galactomannan is a noncellulosic polysaccharides of plant cell wall. This chain is Glucomannan 4-beta-mannosyltransferase 2, found in Arabidopsis thaliana (Mouse-ear cress).